Reading from the N-terminus, the 411-residue chain is 2,3-bisphosphoglycerate-independent phosphoglycerate mutase (411 aa).

Belongs to the BPG-independent phosphoglycerate mutase family. A-PGAM subfamily. In terms of assembly, homotetramer. The cofactor is Mg(2+).

It catalyses the reaction (2R)-2-phosphoglycerate = (2R)-3-phosphoglycerate. The protein operates within carbohydrate degradation; glycolysis; pyruvate from D-glyceraldehyde 3-phosphate: step 3/5. Inhibited to approximately 20% by EDTA. Functionally, catalyzes the interconversion of 2-phosphoglycerate and 3-phosphoglycerate. The chain is 2,3-bisphosphoglycerate-independent phosphoglycerate mutase (apgM) from Pyrococcus furiosus (strain ATCC 43587 / DSM 3638 / JCM 8422 / Vc1).